A 342-amino-acid polypeptide reads, in one-letter code: Mitochondrial fission factor (342 aa).

At 1–322 (MSKGTSSDTS…ENKERAKREM (322 aa)) the chain is on the cytoplasmic side. Thr115 bears the Phosphothreonine mark. Ala146 is modified (phosphoserine). Arg149 bears the Phosphothreonine mark. Residues Lys151, Ser155, Ser157, and Ser172 each carry the phosphoserine modification. Phosphothreonine is present on Thr200. Phosphoserine is present on residues Ser202, Ser229, Ser233, and Ser295. Residues 291-322 (VDAASLRRQIIKLNRRLQLLEEENKERAKREM) are a coiled coil. Residues 323–340 (VMYSITVAFWLLNSWLWF) traverse the membrane as a helical; Anchor for type IV membrane protein segment. Residues 341-342 (RR) lie on the Mitochondrial intermembrane side of the membrane.

It belongs to the Tango11 family. In terms of assembly, homodimer. Interacts with DNM1L. Interacts with C11orf65/MFI; the interaction inhibits MFF interaction with DNM1L. Highly expressed in heart, kidney, liver, brain, muscle, and stomach.

It localises to the mitochondrion outer membrane. Its subcellular location is the peroxisome. The protein resides in the cytoplasmic vesicle. The protein localises to the secretory vesicle. It is found in the synaptic vesicle. In terms of biological role, plays a role in mitochondrial and peroxisomal fission. Promotes the recruitment and association of the fission mediator dynamin-related protein 1 (DNM1L) to the mitochondrial surface. May be involved in regulation of synaptic vesicle membrane dynamics by recruitment of DNM1L to clathrin-containing vesicles. This chain is Mitochondrial fission factor (MFF), found in Homo sapiens (Human).